Reading from the N-terminus, the 131-residue chain is Plastocyanin (131 aa).

The signal sequence occupies residues 1-34 (MKFFASLSKRFAPVLSLVVLVAGTLLLSAAPASA). The 97-residue stretch at 35–131 (ATVQIKMGTD…AGMVGTITVE (97 aa)) folds into the Plastocyanin-like domain. Cu cation-binding residues include His73, Cys116, His119, and Met124.

This sequence belongs to the plastocyanin family. It depends on Cu(2+) as a cofactor.

Its subcellular location is the cellular thylakoid membrane. Its function is as follows. Participates in electron transfer between P700 and the cytochrome b6-f complex in photosystem I. The polypeptide is Plastocyanin (petE) (Prochlorothrix hollandica).